We begin with the raw amino-acid sequence, 1112 residues long: cGMP-inhibited 3',5'-cyclic phosphodiesterase 3B (1112 aa).

Over residues 1–10 (MRRDERDAKA) the composition is skewed to basic and acidic residues. The segment at 1-25 (MRRDERDAKAMRSLQPPDGAGSPPE) is interaction with RAPGEF3. A disordered region spans residues 1–26 (MRRDERDAKAMRSLQPPDGAGSPPES). Phosphoserine is present on Ser13. Transmembrane regions (helical) follow at residues 88 to 108 (FVLA…AAWL), 117 to 137 (HSLS…CFLT), 152 to 172 (WWLL…WQWW), 192 to 212 (AAAG…TLAH), 220 to 240 (VLVL…LGSL), and 247 to 267 (LLSG…DHFF). The residue at position 295 (Ser295) is a Phosphoserine; by PKB/AKT1 or PKB/AKT2. 2 positions are modified to phosphoserine: Ser296 and Ser442. Positions 418–471 (EKGDRKLNKGLNRNSLPTPQLRRSSGTSGLLPVEQSSRWDRNNGKRPHQEFGIS) are disordered. Residues 428-445 (LNRNSLPTPQLRRSSGTS) show a composition bias toward polar residues. Residues 436 to 460 (PQLRRSSGTSGLLPVEQSSRWDRNN) form an interaction with PIK3R6 region. Residues 454 to 466 (SRWDRNNGKRPHQ) are compositionally biased toward basic and acidic residues. Residues 651–1079 (TNIEQEVSLD…KIWKEIVEEE (429 aa)) form the PDEase domain. The active-site Proton donor is His737. His737 provides a ligand contact to AMP. Mg(2+)-binding residues include His741, His821, Asp822, and Asp937. 3 residues coordinate AMP: Asp822, Asp937, and Gln988. Composition is skewed to acidic residues over residues 1017–1041 (EEDN…EEME) and 1103–1112 (QVIEEADEEE). 2 disordered regions span residues 1017–1051 (EEDN…PPRR) and 1092–1112 (ENSS…DEEE).

The protein belongs to the cyclic nucleotide phosphodiesterase family. PDE3 subfamily. In terms of assembly, homodimer. Interacts with PIK3CG; regulates PDE3B activity and thereby cAMP levels in cells. Interacts with RAPGEF3 and PIK3R6; form a signaling complex that regulates phosphatidylinositol 3-kinase gamma in angiogenesis. Interacts with ABHD15; this interaction regulates PDE3B's stability and expression and, thereby, impacts the antilipolytic action of insulin. Mg(2+) serves as cofactor. The cofactor is Mn(2+). Phosphorylation at Ser-295 mediates insulin-induced activation of PDE3B. As to expression, abundant in adipose tissues.

It is found in the membrane. The catalysed reaction is a nucleoside 3',5'-cyclic phosphate + H2O = a nucleoside 5'-phosphate + H(+). It carries out the reaction 3',5'-cyclic AMP + H2O = AMP + H(+). The enzyme catalyses 3',5'-cyclic GMP + H2O = GMP + H(+). Its activity is regulated as follows. Inhibited by cGMP. In terms of biological role, cyclic nucleotide phosphodiesterase with a dual-specificity for the second messengers cAMP and cGMP, which are key regulators of many important physiological process. Regulates angiogenesis by inhibiting the cAMP-dependent guanine nucleotide exchange factor RAPGEF3 and downstream phosphatidylinositol 3-kinase gamma-mediated signaling. Controls cardiac contractility by reducing cAMP concentration in cardiocytes. This chain is cGMP-inhibited 3',5'-cyclic phosphodiesterase 3B, found in Homo sapiens (Human).